We begin with the raw amino-acid sequence, 288 residues long: Syntaxin-1B (288 aa).

The span at 1-13 shows a compositional bias: basic and acidic residues; that stretch reads MKDRTQELRSAKD. The segment at 1-20 is disordered; sequence MKDRTQELRSAKDSDDEEEV. The Cytoplasmic segment spans residues 1 to 264; the sequence is MKDRTQELRS…KYQSKARRKK (264 aa). 2 positions are modified to phosphoserine: Ser10 and Ser14. The stretch at 29 to 104 forms a coiled coil; sequence MDEFFEQVEE…IEQSIEQEEG (76 aa). One can recognise a t-SNARE coiled-coil homology domain in the interval 191–253; it reads LNEIETRHNE…ERAVSDTKKA (63 aa). A helical; Anchor for type IV membrane protein transmembrane segment spans residues 265–288; sequence IMIIICCVVLGVVLASSIGGTLGL.

It belongs to the syntaxin family. Interacts with OTOF. Interacts with SYT6 and SYT8; the interaction is Ca(2+)-dependent. Post-translationally, phosphorylated by CK2. In terms of processing, (Microbial infection) Targeted and hydrolyzed by C.botulinum neurotoxin type C (BoNT/C); cleavage by BoNT/C inhibits neurotransmitter release. Probably hydrolyzes the 252-Lys-|-Ala-253 bond.

It localises to the membrane. Its function is as follows. Potentially involved in docking of synaptic vesicles at presynaptic active zones. May mediate Ca(2+)-regulation of exocytosis acrosomal reaction in sperm. In Bos taurus (Bovine), this protein is Syntaxin-1B (STX1B).